The sequence spans 462 residues: Microspherule protein 1 (462 aa).

M1 carries the post-translational modification N-acetylmethionine. Positions 1–130 are disordered; it reads MDKDSQGLLD…KSKQPLQVTK (130 aa). At S22 the chain carries Phosphoserine. Positions 43–55 are enriched in basic residues; that stretch reads PKRRSSSRFIKRK. The span at 81 to 90 shows a compositional bias: low complexity; sequence SGRCSGSEPS. Phosphoserine is present on S102. Position 103 is a phosphothreonine (T103). The segment covering 103–112 has biased composition (pro residues); the sequence is TPVPPSPAPT. S108 carries the post-translational modification Phosphoserine. A Nuclear localization signal motif is present at residues 113-123; that stretch reads PGLTKRVKKSK. 2 positions are modified to N6-acetyllysine: K123 and K130. Position 282 is a phosphoserine (S282). Positions 301–335 form a coiled coil; it reads LEHELTVADRRQKREIRQLEQELHKWQVLVDSITG. Positions 363–419 constitute an FHA domain; sequence ITLGRATKDNQIDVDLSLEGPAWKISRKQGVIKLKNNGDFFIANEGRRPIYIDGRPV. The UBR5-degron signature appears at 389 to 396; sequence RKQGVIKL.

As to quaternary structure, component of the chromatin remodeling INO80 complex; specifically part of a complex module associated with the N-terminus of INO80. Component of some MLL1/MLL complex, at least composed of the core components KMT2A/MLL1, ASH2L, HCFC1, WDR5 and RBBP5, as well as the facultative components BACC1, CHD8, E2F6, HSP70, INO80C, KANSL1, LAS1L, MAX, MCRS1, MGA, KAT8/MOF, PELP1, PHF20, PRP31, RING2, RUVB1/TIP49A, RUVB2/TIP49B, SENP3, TAF1, TAF4, TAF6, TAF7, TAF9 and TEX10. Component of the NSL complex at least composed of MOF/KAT8, KANSL1, KANSL2, KANSL3, MCRS1, PHF20, OGT1/OGT, WDR5 and HCFC1. Interacts with NOP2. Interacts with PINX1. Interacts with TERT. Interacts with CCDC85B. Interacts with DAXX. Interacts (via N-terminus) with FMR1 (via phosphorylated form). Interacts with FXR1 and FXR2. Interacts (via C-terminus) with NDE1 (via C-terminus); phosphorylation of NDE1 inhibits the interaction. Interacts (via C-terminus) with ZNF375. Interacts (via C-terminus) with active GTP-bound RHEB (via N-terminus) under conditions of high amino acid concentration; the interaction promotes mTORC1 complex activation by RHEB. Interacts (via N-terminus) with the mTORC1 complex; the interaction ensures mTORC1 activation by RHEB. Interacts with DYNC1I1; the interaction is required for the proper distribution of centriolar satellites. Interacts with TTBK2; the interaction is required for recruitment of TTBK2 to the mother centriole. Interacts with KIF2A; the interaction occurs during mitosis and facilitates chromosome alignment. In terms of processing, ubiquitinated by UBR5 when not assembled in the INO80 complex, leading to its degradation: UBR5 recognizes and binds a degron that is not accessible when MCRS1 is part of the INO80 complex. Post-translationally, phosphorylated by AURKA on Ser-35 and/or Ser-36 during mitosis which is required for kinetochore fiber assembly and mitotic progression but not for spindle localization or for chromosome-induced microtuble aster formation. Also phosphorylated by AURKA on Ser-85 and/or Ser-87. Phosphorylated by TTK/MPS1 which enhances recruitment of KIF2A to the minus end of spindle microtubules and facilitates precise chromosome segregation.

Its subcellular location is the nucleus. The protein resides in the nucleolus. It localises to the cytoplasm. The protein localises to the cytoskeleton. It is found in the microtubule organizing center. Its subcellular location is the centrosome. The protein resides in the spindle pole. It localises to the chromosome. The protein localises to the centromere. It is found in the kinetochore. Its subcellular location is the lysosome. The protein resides in the centriolar satellite. Modulates the transcription repressor activity of DAXX by recruiting it to the nucleolus. As part of the NSL complex it may be involved in acetylation of nucleosomal histone H4 on several lysine residues. Putative regulatory component of the chromatin remodeling INO80 complex which is involved in transcriptional regulation, DNA replication and probably DNA repair. May also be an inhibitor of TERT telomerase activity. Binds to G-quadruplex structures in mRNA. Binds to RNA homomer poly(G) and poly(U). Maintains RHEB at the lysosome in its active GTP-bound form and prevents its interaction with the mTORC1 complex inhibitor TSC2, ensuring activation of the mTORC1 complex by RHEB. Stabilizes the minus ends of kinetochore fibers by protecting them from depolymerization, ensuring functional spindle assembly during mitosis. Following phosphorylation by TTK/MPS1, enhances recruitment of KIF2A to the minus ends of mitotic spindle microtubules which promotes chromosome alignment. Regulates the morphology of microtubule minus ends in mitotic spindle by maintaining them in a closed conformation characterized by the presence of an electron-dense cap. Regulates G2/M transition and spindle assembly during oocyte meiosis. Mediates histone modifications and transcriptional regulation in germinal vesicle oocytes which are required for meiotic progression. Also regulates microtubule nucleation and spindle assembly by activating aurora kinases during oocyte meiosis. Contributes to the establishment of centriolar satellites and also plays a role in primary cilium formation by recruiting TTBK2 to the mother centriole which is necessary for removal of the CP110 cap from the mother centriole, an early step in ciliogenesis. Required for epiblast development during early embryogenesis. Essential for cell viability. In Mus musculus (Mouse), this protein is Microspherule protein 1 (Mcrs1).